The chain runs to 199 residues: MSSGNAKIGHPAPNFKATAVMPDGQFKDISLSDYKGKYVVFFFYPLDFTFVCPTEIIAFSDRAEEFKKINCQVIGASVDSHFCHLAWINTPKKQGGLGPMNIPLVSDPKRTIAQDYGVLKADEGISFRGLFIIDDKGILRQITVNDLPVGRSVDETLRLVQAFQFTDKHGEVCPAGWKPGSDTIKPDVQKSKEYFSKQK.

Ser-2 is modified (N-acetylserine). One can recognise a Thioredoxin domain in the interval 6-165 (AKIGHPAPNF…TLRLVQAFQF (160 aa)). Lys-7 is modified (N6-acetyllysine; alternate). Residue Lys-7 forms a Glycyl lysine isopeptide (Lys-Gly) (interchain with G-Cter in SUMO2); alternate linkage. Lys-16 and Lys-27 each carry N6-acetyllysine. The residue at position 32 (Ser-32) is a Phosphoserine. Lys-35 carries the N6-acetyllysine; alternate modification. N6-succinyllysine; alternate is present on Lys-35. The Cysteine sulfenic acid (-SOH) intermediate role is filled by Cys-52. Residue Thr-90 is modified to Phosphothreonine. Lys-120 is covalently cross-linked (Glycyl lysine isopeptide (Lys-Gly) (interchain with G-Cter in SUMO2)). At Lys-136 the chain carries N6-acetyllysine. The disordered stretch occupies residues 176–199 (GWKPGSDTIKPDVQKSKEYFSKQK). Positions 184 to 199 (IKPDVQKSKEYFSKQK) are enriched in basic and acidic residues. Lys-185 participates in a covalent cross-link: Glycyl lysine isopeptide (Lys-Gly) (interchain with G-Cter in SUMO1). Position 197 is an N6-acetyllysine (Lys-197).

It belongs to the peroxiredoxin family. AhpC/Prx1 subfamily. In terms of assembly, homodimer; disulfide-linked, upon oxidation. 5 homodimers assemble to form a ring-like decamer. Interacts with GDPD5; forms a mixed-disulfide with GDPD5. Interacts with SESN1 and SESN2. Interacts with FAM107A. Post-translationally, phosphorylated on Thr-90 during the M-phase, which leads to a decrease in enzymatic activity. In terms of processing, acetylation increases reducing activity and resistance to superoxidation. Deacetylated by HDAC6 which decreases reducing activity. In terms of tissue distribution, detected in heart and skeletal muscle (at protein level).

It is found in the cytoplasm. It catalyses the reaction a hydroperoxide + [thioredoxin]-dithiol = an alcohol + [thioredoxin]-disulfide + H2O. Thiol-specific peroxidase that catalyzes the reduction of hydrogen peroxide and organic hydroperoxides to water and alcohols, respectively. Plays a role in cell protection against oxidative stress by detoxifying peroxides and as sensor of hydrogen peroxide-mediated signaling events. Might participate in the signaling cascades of growth factors and tumor necrosis factor-alpha by regulating the intracellular concentrations of H(2)O(2). Reduces an intramolecular disulfide bond in GDPD5 that gates the ability to GDPD5 to drive postmitotic motor neuron differentiation. The polypeptide is Peroxiredoxin-1 (PRDX1) (Myotis lucifugus (Little brown bat)).